Reading from the N-terminus, the 109-residue chain is FK506-binding protein (109 aa).

One can recognise a PPIase FKBP-type domain in the interval 20 to 108 (GKEITVHYTG…IFEVELLKVY (89 aa)).

Belongs to the FKBP-type PPIase family.

The enzyme catalyses [protein]-peptidylproline (omega=180) = [protein]-peptidylproline (omega=0). Its activity is regulated as follows. Inhibited by FK506. PPIases accelerate the folding of proteins. This is FK506-binding protein (fbp) from Neisseria meningitidis serogroup A / serotype 4A (strain DSM 15465 / Z2491).